A 329-amino-acid chain; its full sequence is DNA-directed RNA polymerase subunit alpha (329 aa).

An alpha N-terminal domain (alpha-NTD) region spans residues Met-1–Glu-234. The alpha C-terminal domain (alpha-CTD) stretch occupies residues Ile-248–Asp-329.

This sequence belongs to the RNA polymerase alpha chain family. Homodimer. The RNAP catalytic core consists of 2 alpha, 1 beta, 1 beta' and 1 omega subunit. When a sigma factor is associated with the core the holoenzyme is formed, which can initiate transcription.

The enzyme catalyses RNA(n) + a ribonucleoside 5'-triphosphate = RNA(n+1) + diphosphate. In terms of biological role, DNA-dependent RNA polymerase catalyzes the transcription of DNA into RNA using the four ribonucleoside triphosphates as substrates. The protein is DNA-directed RNA polymerase subunit alpha of Saccharophagus degradans (strain 2-40 / ATCC 43961 / DSM 17024).